The sequence spans 509 residues: MPSLRLLAILTTLLAVVLMATQSSATRTTRRPKPQNTKKPPRGGGTGGGGGGGDQPARLGFRQTTTTMSPSSSLGTDETTEDTMTDAYSLSPTDSTTYAGDAYPTEFHTDSMALPGAGMGNYTLDYSHCYLNVCECCPPEKGPVGPPGERGPPGPGAERAPAVPSETLALMLGTDIYTHTFKIPILLSFYLIGDKGDQGDTGMPGAPGILGKEGQKGDLGPKGEKGETGLPGLKGDLGERGKPGWNGTQGEKGDLGKIGPAGPSGLTGPMGQNGQKGEMGECPTGEKGEKGEAGLPGPPGPRGSVGPPGVNGSNGLPGPVGLRGQLGSPGGKGEAGGRGPPGLRGMPGPKGEKGPKGPRGVRGPKGPQGETAEQIRSAFSVGLFPSKSFPPPGLPVKFDKVLYNEEEHWDPMLSKFNCTHPGVYVFSYHITVRNRPLRAALVINGVKKLRTRDSLYGQDIDQASNLALLRLASGDQVWLETLRDWNGVYSSSEDDSTFTGFLLYADPKA.

The signal sequence occupies residues 1–25 (MPSLRLLAILTTLLAVVLMATQSSA). Residues 23–96 (SSATRTTRRP…AYSLSPTDST (74 aa)) form a disordered region. Residues 42 to 54 (RGGGTGGGGGGGD) show a composition bias toward gly residues. The span at 62 to 75 (RQTTTTMSPSSSLG) shows a compositional bias: polar residues. An N-linked (GlcNAc...) asparagine glycan is attached at Asn-121. The Collagen-like 1 domain maps to 193-244 (GDKGDQGDTGMPGAPGILGKEGQKGDLGPKGEKGETGLPGLKGDLGERGKPG). The interval 202–372 (GMPGAPGILG…GPKGPQGETA (171 aa)) is disordered. Residues 213–227 (EGQKGDLGPKGEKGE) show a composition bias toward basic and acidic residues. 2 N-linked (GlcNAc...) asparagine glycosylation sites follow: Asn-246 and Asn-311. The region spanning 285 to 329 (GEKGEKGEAGLPGPPGPRGSVGPPGVNGSNGLPGPVGLRGQLGSP) is the Collagen-like 2 domain. The segment covering 302–322 (RGSVGPPGVNGSNGLPGPVGL) has biased composition (low complexity). Residues 327-342 (GSPGGKGEAGGRGPPG) show a composition bias toward gly residues. Residues 372–509 (AEQIRSAFSV…GFLLYADPKA (138 aa)) enclose the C1q domain. A glycan (N-linked (GlcNAc...) asparagine) is linked at Asn-417.

It belongs to the OTOL1 family. As to quaternary structure, homooligomer; disulfide-linked; probably forms homotrimers. Interacts with otomp.

The protein resides in the secreted. The protein localises to the extracellular space. It localises to the extracellular matrix. Collagen-like protein, which provides an organic scaffold for otoliths onto the sensory epithelium of the inner ear. Acts as a scaffold for biomineralization by sequestering calcium. The protein is Otolin-1 (Otol1) of Oncorhynchus mykiss (Rainbow trout).